Consider the following 156-residue polypeptide: 6,7-dimethyl-8-ribityllumazine synthase (156 aa).

5-amino-6-(D-ribitylamino)uracil contacts are provided by residues Phe22, 57–59 (AYE), and 81–83 (TVI). (2S)-2-hydroxy-3-oxobutyl phosphate is bound at residue 86–87 (GT). The Proton donor role is filled by His89. Residue Phe114 participates in 5-amino-6-(D-ribitylamino)uracil binding. Arg128 lines the (2S)-2-hydroxy-3-oxobutyl phosphate pocket.

Belongs to the DMRL synthase family. Forms an icosahedral capsid composed of 60 subunits, arranged as a dodecamer of pentamers.

It carries out the reaction (2S)-2-hydroxy-3-oxobutyl phosphate + 5-amino-6-(D-ribitylamino)uracil = 6,7-dimethyl-8-(1-D-ribityl)lumazine + phosphate + 2 H2O + H(+). It participates in cofactor biosynthesis; riboflavin biosynthesis; riboflavin from 2-hydroxy-3-oxobutyl phosphate and 5-amino-6-(D-ribitylamino)uracil: step 1/2. In terms of biological role, catalyzes the formation of 6,7-dimethyl-8-ribityllumazine by condensation of 5-amino-6-(D-ribitylamino)uracil with 3,4-dihydroxy-2-butanone 4-phosphate. This is the penultimate step in the biosynthesis of riboflavin. In Serratia proteamaculans (strain 568), this protein is 6,7-dimethyl-8-ribityllumazine synthase.